The sequence spans 185 residues: Ribosome-recycling factor (185 aa).

This sequence belongs to the RRF family.

The protein resides in the cytoplasm. Responsible for the release of ribosomes from messenger RNA at the termination of protein biosynthesis. May increase the efficiency of translation by recycling ribosomes from one round of translation to another. This is Ribosome-recycling factor from Ehrlichia ruminantium (strain Gardel).